We begin with the raw amino-acid sequence, 184 residues long: Ribosome maturation factor RimM (184 aa).

The 80-residue stretch at 105-184 folds into the PRC barrel domain; it reads EDEFYWRELF…RIEVDWDPAF (80 aa).

The protein belongs to the RimM family. In terms of assembly, binds ribosomal protein uS19.

It localises to the cytoplasm. Its function is as follows. An accessory protein needed during the final step in the assembly of 30S ribosomal subunit, possibly for assembly of the head region. Essential for efficient processing of 16S rRNA. May be needed both before and after RbfA during the maturation of 16S rRNA. It has affinity for free ribosomal 30S subunits but not for 70S ribosomes. The protein is Ribosome maturation factor RimM of Vibrio cholerae serotype O1 (strain ATCC 39541 / Classical Ogawa 395 / O395).